A 723-amino-acid polypeptide reads, in one-letter code: Dipeptidyl aminopeptidase BI (723 aa).

The first 23 residues, M1 to A23, serve as a signal peptide directing secretion. Catalysis depends on charge relay system residues S574, D659, and H694.

It belongs to the peptidase S9A family. As to quaternary structure, monomer.

With respect to regulation, nearly completely inhibited by 0.5 mM ZnCl(2), 0.1 mM N-tosyl-L-lysyl chloromethyl ketone (TLCK) and 0.1 mM leupeptin. Strongly inhibited by 0.5 mM CoCl(2) and 0.1 mM chymostatin. Activity is hardly affected by general serine protease inhibitors phenylmethanesulfonyl fluoride (PMSF), diisopropyl fluorophosphate (DFP) and N-tosyl-L-phenyl-alanyl chloromethyl ketone (TPCK) or by aspartyl protease inhibitor pepstatin A or by CaCl(2) and EDTA. Cysteine protease inhibitors, such as N-ethylmaleimide (NEM), iodoacetic acid and L-trans-epoxysuccinyl-leucylamido(4-guanido)butane (E-64) have no effect on activity. In terms of biological role, sequentially removes dipeptide units (NH3-P2-P1-) from the amino termini of peptides and proteins. Is able to catalyze the removal of Asp-Arg from the amino termini of angiotensins I and II. Has slight endopeptidase activity on N-terminally blocked peptide derivatives which contain arginine residues at the P1 position. Does not hydrolyze Ala-Ala-Ala and Ala-Ala-Ala-Ala substrates or insulin beta chain. This chain is Dipeptidyl aminopeptidase BI, found in Pseudoxanthomonas mexicana.